The following is a 460-amino-acid chain: Light-independent protochlorophyllide reductase subunit N (460 aa).

3 residues coordinate [4Fe-4S] cluster: Cys-20, Cys-45, and Cys-105.

The protein belongs to the BchN/ChlN family. Protochlorophyllide reductase is composed of three subunits; ChlL, ChlN and ChlB. Forms a heterotetramer of two ChlB and two ChlN subunits. The cofactor is [4Fe-4S] cluster.

The protein resides in the plastid. It is found in the chloroplast. The enzyme catalyses chlorophyllide a + oxidized 2[4Fe-4S]-[ferredoxin] + 2 ADP + 2 phosphate = protochlorophyllide a + reduced 2[4Fe-4S]-[ferredoxin] + 2 ATP + 2 H2O. It functions in the pathway porphyrin-containing compound metabolism; chlorophyll biosynthesis (light-independent). In terms of biological role, component of the dark-operative protochlorophyllide reductase (DPOR) that uses Mg-ATP and reduced ferredoxin to reduce ring D of protochlorophyllide (Pchlide) to form chlorophyllide a (Chlide). This reaction is light-independent. The NB-protein (ChlN-ChlB) is the catalytic component of the complex. In Adiantum capillus-veneris (Maidenhair fern), this protein is Light-independent protochlorophyllide reductase subunit N.